The sequence spans 354 residues: MLVLGIESSCDETGVALYDTERGLRSHCLHTQMAMHAEYGGVVPELASRDHIRRLVPLTEGCLAQAGASYGDIDAVAFTQGPGLGGALLAGSSYANALALALDKPVIPVHHLEGHLLSPLLAEEKPDFPFVALLVSGGHTQIMAVRGIGDYELLGESVDDAAGEAFDKTAKLLGLPYPGGAKLSELAESGRPEAFVFPRPMIHSDDLQMSFSGLKTAVLTAVEKVREANGSETIPEQTRNNICRAFQDAVVEVLEAKVKKALLQTGFRTVVVAGGVGANRKLRETFGNMTVQIPTPKGKPKHPSEKVSVFFPPMAYCTDNGAMIAFAGAMHLGKGREVGAFNVRPRWSLSEIVK.

Positions 111 and 115 each coordinate Fe cation. Residues 134 to 138, aspartate 167, glycine 180, and asparagine 279 each bind substrate; that span reads LVSGG. Aspartate 319 is a binding site for Fe cation.

It belongs to the KAE1 / TsaD family. Fe(2+) serves as cofactor.

It is found in the cytoplasm. It carries out the reaction L-threonylcarbamoyladenylate + adenosine(37) in tRNA = N(6)-L-threonylcarbamoyladenosine(37) in tRNA + AMP + H(+). Functionally, required for the formation of a threonylcarbamoyl group on adenosine at position 37 (t(6)A37) in tRNAs that read codons beginning with adenine. Is involved in the transfer of the threonylcarbamoyl moiety of threonylcarbamoyl-AMP (TC-AMP) to the N6 group of A37, together with TsaE and TsaB. TsaD likely plays a direct catalytic role in this reaction. In Neisseria gonorrhoeae (strain ATCC 700825 / FA 1090), this protein is tRNA N6-adenosine threonylcarbamoyltransferase.